The following is a 504-amino-acid chain: 26S proteasome non-ATPase regulatory subunit 3 (504 aa).

One can recognise a PCI domain in the interval 254-434 (ARYFYYQGRI…GYLQSRENID (181 aa)). Residues 485 to 504 (KEEMERQAEESSDNEGDSDF) form a disordered region. Residues 494–504 (ESSDNEGDSDF) are compositionally biased toward acidic residues.

It belongs to the proteasome subunit S3 family. The 26S proteasome is composed of a core protease, known as the 20S proteasome, capped at one or both ends by the 19S regulatory complex (RC). The RC is composed of at least 18 different subunits in two subcomplexes, the base and the lid, which form the portions proximal and distal to the 20S proteolytic core, respectively.

Functionally, acts as a regulatory subunit of the 26 proteasome which is involved in the ATP-dependent degradation of ubiquitinated proteins. The polypeptide is 26S proteasome non-ATPase regulatory subunit 3 (psmD3) (Dictyostelium discoideum (Social amoeba)).